Here is a 181-residue protein sequence, read N- to C-terminus: uncharacterized protein (181 aa).

In terms of domain architecture, Nudix hydrolase spans 35 to 175; sequence LRHRCVFVWA…ARLRAWRGAS (141 aa). The Nudix box signature appears at 72–94; the sequence is GGVVGAGESYDDAALREAEEELG. Positions 88 and 92 each coordinate Mg(2+).

It belongs to the Nudix hydrolase family. Mg(2+) serves as cofactor.

This is an uncharacterized protein from Streptomyces coelicolor (strain ATCC BAA-471 / A3(2) / M145).